A 404-amino-acid chain; its full sequence is Zinc finger CCCH domain-containing protein 3 (404 aa).

5 C3H1-type zinc fingers span residues 47–75 (RPGE…HPTH), 90–118 (RIGQ…HPKD), 135–163 (RLGE…HPQP), 261–289 (SSDQ…HPGV), and 307–335 (RPGQ…HPML). Residues 350 to 374 (FASPVTTHQRISPTPNRSDSKSLSN) show a composition bias toward polar residues. A disordered region spans residues 350–404 (FASPVTTHQRISPTPNRSDSKSLSNGKPDVKKESSETEKPDNGEVQDLSEDASSP). The span at 377–391 (PDVKKESSETEKPDN) shows a compositional bias: basic and acidic residues.

It localises to the nucleus. Functionally, possesses RNA-binding and ribonuclease activities in vitro. This Arabidopsis thaliana (Mouse-ear cress) protein is Zinc finger CCCH domain-containing protein 3.